The primary structure comprises 429 residues: Enolase (429 aa).

Position 163 (glutamine 163) interacts with (2R)-2-phosphoglycerate. The active-site Proton donor is glutamate 205. Mg(2+) is bound by residues aspartate 242, glutamate 286, and aspartate 313. Residues lysine 338, arginine 367, serine 368, and lysine 389 each coordinate (2R)-2-phosphoglycerate. Lysine 338 acts as the Proton acceptor in catalysis.

It belongs to the enolase family. Mg(2+) is required as a cofactor.

It is found in the cytoplasm. The protein localises to the secreted. The protein resides in the cell surface. It catalyses the reaction (2R)-2-phosphoglycerate = phosphoenolpyruvate + H2O. Its pathway is carbohydrate degradation; glycolysis; pyruvate from D-glyceraldehyde 3-phosphate: step 4/5. Its function is as follows. Catalyzes the reversible conversion of 2-phosphoglycerate (2-PG) into phosphoenolpyruvate (PEP). It is essential for the degradation of carbohydrates via glycolysis. This chain is Enolase, found in Pelobacter propionicus (strain DSM 2379 / NBRC 103807 / OttBd1).